The chain runs to 159 residues: Probable epoxidase scpX (159 aa).

Residues 1–25 (MATLIRLLRLLPVASSSAVLMFALD) form the signal peptide. Transmembrane regions (helical) follow at residues 59–79 (WVLI…LFIS) and 96–116 (LLFS…IAAI). Asn-124 and Asn-136 each carry an N-linked (GlcNAc...) asparagine glycan. A helical membrane pass occupies residues 139–159 (RALLTDLPAWLCFIAAALKAL).

Belongs to the epoxidase xenD family.

The protein resides in the membrane. It functions in the pathway mycotoxin biosynthesis. In terms of biological role, probable epoxidase; part of the gene scp cluster that mediates the biosynthesis of a hirsutellone-like compound that has still to be identified. This Mollisia scopiformis (Conifer needle endophyte fungus) protein is Probable epoxidase scpX.